Reading from the N-terminus, the 155-residue chain is Small ribosomal subunit protein uS7 (155 aa).

The protein belongs to the universal ribosomal protein uS7 family. Part of the 30S ribosomal subunit. Contacts proteins S9 and S11.

Its function is as follows. One of the primary rRNA binding proteins, it binds directly to 16S rRNA where it nucleates assembly of the head domain of the 30S subunit. Is located at the subunit interface close to the decoding center, probably blocks exit of the E-site tRNA. This Sulfurovum sp. (strain NBC37-1) protein is Small ribosomal subunit protein uS7.